Here is a 228-residue protein sequence, read N- to C-terminus: Translation initiation factor 6 (228 aa).

Belongs to the eIF-6 family.

Its function is as follows. Binds to the 50S ribosomal subunit and prevents its association with the 30S ribosomal subunit to form the 70S initiation complex. The protein is Translation initiation factor 6 of Thermococcus onnurineus (strain NA1).